Here is a 119-residue protein sequence, read N- to C-terminus: Holo-[acyl-carrier-protein] synthase (119 aa).

Mg(2+) is bound by residues D5 and E51.

The protein belongs to the P-Pant transferase superfamily. AcpS family. It depends on Mg(2+) as a cofactor.

The protein resides in the cytoplasm. It carries out the reaction apo-[ACP] + CoA = holo-[ACP] + adenosine 3',5'-bisphosphate + H(+). Functionally, transfers the 4'-phosphopantetheine moiety from coenzyme A to a Ser of acyl-carrier-protein. The chain is Holo-[acyl-carrier-protein] synthase from Helicobacter pylori (strain G27).